The chain runs to 161 residues: uncharacterized protein (161 aa).

2 helical membrane-spanning segments follow: residues 13 to 35 and 40 to 62; these read VAAVFAALYTSILGLAVLIPHAN and VFSAVMAAGLGILIALLAVPFIS.

The protein localises to the cell membrane. This is an uncharacterized protein from Archaeoglobus fulgidus (strain ATCC 49558 / DSM 4304 / JCM 9628 / NBRC 100126 / VC-16).